A 199-amino-acid polypeptide reads, in one-letter code: Cytochrome c oxidase subunit 2 (199 aa).

A helical membrane pass occupies residues alanine 1–methionine 13. Residues leucine 14–glutamine 26 are Mitochondrial matrix-facing. A helical transmembrane segment spans residues glutamate 27–methionine 54. The Mitochondrial intermembrane portion of the chain corresponds to aspartate 55–leucine 199. Cu cation contacts are provided by histidine 128, cysteine 163, glutamate 165, cysteine 167, histidine 171, and methionine 174. Glutamate 165 serves as a coordination point for Mg(2+).

It belongs to the cytochrome c oxidase subunit 2 family. As to quaternary structure, component of the cytochrome c oxidase (complex IV, CIV), a multisubunit enzyme composed of 14 subunits. The complex is composed of a catalytic core of 3 subunits MT-CO1, MT-CO2 and MT-CO3, encoded in the mitochondrial DNA, and 11 supernumerary subunits COX4I, COX5A, COX5B, COX6A, COX6B, COX6C, COX7A, COX7B, COX7C, COX8 and NDUFA4, which are encoded in the nuclear genome. The complex exists as a monomer or a dimer and forms supercomplexes (SCs) in the inner mitochondrial membrane with NADH-ubiquinone oxidoreductase (complex I, CI) and ubiquinol-cytochrome c oxidoreductase (cytochrome b-c1 complex, complex III, CIII), resulting in different assemblies (supercomplex SCI(1)III(2)IV(1) and megacomplex MCI(2)III(2)IV(2)). Found in a complex with TMEM177, COA6, COX18, COX20, SCO1 and SCO2. Interacts with TMEM177 in a COX20-dependent manner. Interacts with COX20. Interacts with COX16. The cofactor is Cu cation.

Its subcellular location is the mitochondrion inner membrane. The catalysed reaction is 4 Fe(II)-[cytochrome c] + O2 + 8 H(+)(in) = 4 Fe(III)-[cytochrome c] + 2 H2O + 4 H(+)(out). Functionally, component of the cytochrome c oxidase, the last enzyme in the mitochondrial electron transport chain which drives oxidative phosphorylation. The respiratory chain contains 3 multisubunit complexes succinate dehydrogenase (complex II, CII), ubiquinol-cytochrome c oxidoreductase (cytochrome b-c1 complex, complex III, CIII) and cytochrome c oxidase (complex IV, CIV), that cooperate to transfer electrons derived from NADH and succinate to molecular oxygen, creating an electrochemical gradient over the inner membrane that drives transmembrane transport and the ATP synthase. Cytochrome c oxidase is the component of the respiratory chain that catalyzes the reduction of oxygen to water. Electrons originating from reduced cytochrome c in the intermembrane space (IMS) are transferred via the dinuclear copper A center (CU(A)) of subunit 2 and heme A of subunit 1 to the active site in subunit 1, a binuclear center (BNC) formed by heme A3 and copper B (CU(B)). The BNC reduces molecular oxygen to 2 water molecules using 4 electrons from cytochrome c in the IMS and 4 protons from the mitochondrial matrix. The protein is Cytochrome c oxidase subunit 2 (MT-CO2) of Dromaius novaehollandiae (Emu).